Reading from the N-terminus, the 340-residue chain is Probable tRNA pseudouridine synthase B (340 aa).

The Nucleophile role is filled by D82. A PUA domain is found at 250-325 (LPKVWIKDSA…IAVDVEKVFM (76 aa)).

The protein belongs to the pseudouridine synthase TruB family. Type 2 subfamily.

The catalysed reaction is uridine(55) in tRNA = pseudouridine(55) in tRNA. Could be responsible for synthesis of pseudouridine from uracil-55 in the psi GC loop of transfer RNAs. In Pyrococcus furiosus (strain ATCC 43587 / DSM 3638 / JCM 8422 / Vc1), this protein is Probable tRNA pseudouridine synthase B.